The following is a 145-amino-acid chain: Selenoprotein M (145 aa).

Residues 1 to 23 (MSILLSPPSLLLLLAALVAPATS) form the signal peptide. Residues Cys45 and Sec48 each act as nucleophile in the active site. Residues 45-48 (CGGU) constitute a cross-link (cysteinyl-selenocysteine (Cys-Sec)). A non-standard amino acid (selenocysteine) is located at residue Sec48. Residues 125-145 (PPEYLWAPAKPPEEASEHDDL) are disordered.

This sequence belongs to the selenoprotein M/F family. In terms of tissue distribution, widely expressed. Highly expressed in brain.

It is found in the cytoplasm. The protein resides in the perinuclear region. The protein localises to the endoplasmic reticulum. It localises to the golgi apparatus. In terms of biological role, may function as a thiol-disulfide oxidoreductase that participates in disulfide bond formation. This Mus musculus (Mouse) protein is Selenoprotein M.